The sequence spans 368 residues: 1-deoxy-D-xylulose 5-phosphate reductoisomerase (368 aa).

Residues Thr-7, Gly-8, Ser-9, Ile-10, Gly-31, Lys-32, Asn-33, and Asn-113 each coordinate NADPH. Lys-114 is a 1-deoxy-D-xylulose 5-phosphate binding site. NADPH is bound at residue Glu-115. Asp-133 contacts Mn(2+). Residues Ser-134, Glu-135, Ser-158, and His-181 each contribute to the 1-deoxy-D-xylulose 5-phosphate site. Residue Glu-135 participates in Mn(2+) binding. Gly-187 contributes to the NADPH binding site. The 1-deoxy-D-xylulose 5-phosphate site is built by Ser-194, Asn-199, Lys-200, and Glu-203. Glu-203 is a Mn(2+) binding site.

The protein belongs to the DXR family. The cofactor is Mg(2+). It depends on Mn(2+) as a cofactor.

The enzyme catalyses 2-C-methyl-D-erythritol 4-phosphate + NADP(+) = 1-deoxy-D-xylulose 5-phosphate + NADPH + H(+). It participates in isoprenoid biosynthesis; isopentenyl diphosphate biosynthesis via DXP pathway; isopentenyl diphosphate from 1-deoxy-D-xylulose 5-phosphate: step 1/6. In terms of biological role, catalyzes the NADPH-dependent rearrangement and reduction of 1-deoxy-D-xylulose-5-phosphate (DXP) to 2-C-methyl-D-erythritol 4-phosphate (MEP). This is 1-deoxy-D-xylulose 5-phosphate reductoisomerase from Helicobacter pylori (strain Shi470).